The following is a 777-amino-acid chain: CRISPR system single-strand-specific deoxyribonuclease Cas10/Csm1 (subtype III-A) (777 aa).

The HD domain maps to 1–106 (MEIDELTALG…VYEADNLASG (106 aa)). The region spanning 513–660 (RRLGVMKGDV…GRNRVFVVGR (148 aa)) is the GGDEF domain.

Belongs to the CRISPR-associated Cas10/Csm1 family. Probably part of the Csm effector complex, that includes Cas10, Csm2, Csm3, Csm4, Csm5 and mature crRNA. Will form a homodimer in solution, interacts with Csm4, which is a tighter, better association than the homodimeric Cas10 and uses the same interface for interaction. The cofactor is a divalent metal cation.

Its activity is regulated as follows. ssDNase activity is inhibited by EDTA. Functionally, CRISPR (clustered regularly interspaced short palindromic repeat) is an adaptive immune system that provides protection against mobile genetic elements (viruses, transposable elements and conjugative plasmids). CRISPR clusters contain spacers, sequences complementary to antecedent mobile elements, and target invading nucleic acids. CRISPR clusters are transcribed and processed into CRISPR RNA (crRNA). The type III-A Csm effector complex binds crRNA and acts as a crRNA-guided RNase, DNase and cyclic oligoadenylate synthase; binding of target RNA cognate to the crRNA is required for all activities. A single-strand deoxyribonuclease (ssDNase) which digests linear and circular ssDNA; has 5'-3' and 3'-5' exonuclease activity as well as a less efficient endonuclease activity. Has a minimal size requirement; 100 nucleotide ssDNA (nt) is more efficiently digested than 50 or 25 nt ssDNA, while 14 nt ssDNA is not cleaved at all. It has no activity on dsDNA or ssRNA. Its function is as follows. ssDNase activity is stimulated in the ternary Csm effector complex; binding of cognate target RNA activates the ssDNase, as the target RNA is degraded ssDNA activity decreases. In terms of biological role, when associated with the ternary Csm effector complex (the crRNA, Cas proteins and a cognate target ssRNA) synthesizes cyclic oligoadenylates (cOA) from ATP. cOAs are second messengers that stimulate the ssRNase activity of Csm6, inducing an antiviral state important for defense against invading nucleic acids. The sequence is that of CRISPR system single-strand-specific deoxyribonuclease Cas10/Csm1 (subtype III-A) from Thermococcus onnurineus (strain NA1).